Consider the following 233-residue polypeptide: Outer membrane protein MIP (233 aa).

An N-terminal signal peptide occupies residues methionine 1 to alanine 20. In terms of domain architecture, PPIase FKBP-type spans serine 144–serine 233.

This sequence belongs to the FKBP-type PPIase family.

The protein localises to the cell outer membrane. It catalyses the reaction [protein]-peptidylproline (omega=180) = [protein]-peptidylproline (omega=0). Essential virulence factor associated with macrophage infectivity. Exhibits PPIase activity. This is Outer membrane protein MIP (mip) from Legionella pneumophila (strain Corby).